A 135-amino-acid chain; its full sequence is Histone H3 type 2 (135 aa).

The tract at residues 1–40 is disordered; the sequence is MARTKQTARKSTGGKAPRKQLATKAARKTPATGGVKKPHR. Lys-5 is modified (N6-methyllysine). Residue Lys-10 is modified to N6-acetyllysine; alternate. Position 10 is an N6-methyllysine; alternate (Lys-10). Ser-11 is modified (phosphoserine). Thr-12 bears the Phosphothreonine mark. 3 positions are modified to N6-acetyllysine: Lys-15, Lys-19, and Lys-24. Lys-28 carries the post-translational modification N6-acetyllysine; alternate. Residue Lys-28 is modified to N6-methyllysine; alternate. N6-methyllysine is present on residues Lys-36 and Lys-37.

The protein belongs to the histone H3 family. As to quaternary structure, the nucleosome is a histone octamer containing two molecules each of H2A, H2B, H3 and H4 assembled in one H3-H4 heterotetramer and two H2A-H2B heterodimers. The octamer wraps approximately 147 bp of DNA. Post-translationally, acetylation is generally linked to gene activation. Acetylated to form H3K9ac (11%), H3K14ac (17%), H3K18ac (11%), H3K23ac (16%) and H3K27ac (7%). H3K4, H3K35 and H3K36 are not acetylated. H3K4me prevents acetylation. 32% of the histone H3 are acetylated with, on average, 2.4 acetyl-Lys. They are all continuously deacatylated and re-acetylated with a half-life of approximately 2 minutes. Monomethylated to form H3K4me1 (81%), H3K9me1 (16%), H3K27me1 (25%), H3K35me1 (25%) and H3K36me1 (5%). No methylation at H3K14, H3K18 and H3K23. Methylated by a protein complex that includes Mut11. Set1 methylates specifically H3K4. H3K4me1 is associated with silenced euchromatin. Set3 forms H3K9me1, while H3K9me2 is undetected. H3K9me1 is specifically associated with silent, multi-copy transgenes. In terms of processing, no phosphorylation detected.

It localises to the nucleus. It is found in the chromosome. Core component of nucleosome. Nucleosomes wrap and compact DNA into chromatin, limiting DNA accessibility to the cellular machineries which require DNA as a template. Histones thereby play a central role in transcription regulation, DNA repair, DNA replication and chromosomal stability. DNA accessibility is regulated via a complex set of post-translational modifications of histones, also called histone code, and nucleosome remodeling. The chain is Histone H3 type 2 (ch3-II) from Chlamydomonas reinhardtii (Chlamydomonas smithii).